Here is a 234-residue protein sequence, read N- to C-terminus: 2,3,4,5-tetrahydropyridine-2,6-dicarboxylate N-acetyltransferase (234 aa).

Belongs to the transferase hexapeptide repeat family. DapH subfamily.

It catalyses the reaction (S)-2,3,4,5-tetrahydrodipicolinate + acetyl-CoA + H2O = L-2-acetamido-6-oxoheptanedioate + CoA. It functions in the pathway amino-acid biosynthesis; L-lysine biosynthesis via DAP pathway; LL-2,6-diaminopimelate from (S)-tetrahydrodipicolinate (acetylase route): step 1/3. Functionally, catalyzes the transfer of an acetyl group from acetyl-CoA to tetrahydrodipicolinate. The polypeptide is 2,3,4,5-tetrahydropyridine-2,6-dicarboxylate N-acetyltransferase (Leuconostoc citreum (strain KM20)).